The following is a 1400-amino-acid chain: DNA-directed RNA polymerase subunit beta' (1400 aa).

Residues cysteine 71, cysteine 73, cysteine 86, and cysteine 89 each coordinate Zn(2+). Mg(2+) is bound by residues aspartate 462, aspartate 464, and aspartate 466. Cysteine 810, cysteine 884, cysteine 891, and cysteine 894 together coordinate Zn(2+).

It belongs to the RNA polymerase beta' chain family. As to quaternary structure, the RNAP catalytic core consists of 2 alpha, 1 beta, 1 beta' and 1 omega subunit. When a sigma factor is associated with the core the holoenzyme is formed, which can initiate transcription. The cofactor is Mg(2+). It depends on Zn(2+) as a cofactor.

The catalysed reaction is RNA(n) + a ribonucleoside 5'-triphosphate = RNA(n+1) + diphosphate. In terms of biological role, DNA-dependent RNA polymerase catalyzes the transcription of DNA into RNA using the four ribonucleoside triphosphates as substrates. The protein is DNA-directed RNA polymerase subunit beta' of Rhodopseudomonas palustris (strain TIE-1).